A 30-amino-acid chain; its full sequence is Thrombin-like enzyme LmrSP-2 (30 aa).

Belongs to the peptidase S1 family. Snake venom subfamily. As to expression, expressed by the venom gland.

It localises to the secreted. Functionally, thrombin-like snake venom serine protease that cleaves alpha-chain of fibrinogen (FGA) releases only fibrinopeptide A. Shows coagulant, esterase and amidase activities. This Lachesis muta rhombeata (Bushmaster) protein is Thrombin-like enzyme LmrSP-2.